Reading from the N-terminus, the 319-residue chain is 1-aminocyclopropane-1-carboxylate oxidase (319 aa).

The Fe2OG dioxygenase domain maps to 152 to 253 (GPNFGSKVSN…RMSLASFYNP (102 aa)). Residues His177, Asp179, and His234 each contribute to the Fe cation site.

The protein belongs to the iron/ascorbate-dependent oxidoreductase family. The cofactor is Fe cation.

It catalyses the reaction 1-aminocyclopropane-1-carboxylate + L-ascorbate + O2 = ethene + L-dehydroascorbate + hydrogen cyanide + CO2 + 2 H2O. It functions in the pathway alkene biosynthesis; ethylene biosynthesis via S-adenosyl-L-methionine; ethylene from S-adenosyl-L-methionine: step 2/2. The sequence is that of 1-aminocyclopropane-1-carboxylate oxidase (ACO) from Nicotiana tabacum (Common tobacco).